The primary structure comprises 421 residues: Histidine--tRNA ligase (421 aa).

This sequence belongs to the class-II aminoacyl-tRNA synthetase family. In terms of assembly, homodimer.

It localises to the cytoplasm. The enzyme catalyses tRNA(His) + L-histidine + ATP = L-histidyl-tRNA(His) + AMP + diphosphate + H(+). The chain is Histidine--tRNA ligase from Alkaliphilus oremlandii (strain OhILAs) (Clostridium oremlandii (strain OhILAs)).